The chain runs to 130 residues: Small ribosomal subunit protein uS9 (130 aa).

It belongs to the universal ribosomal protein uS9 family.

This is Small ribosomal subunit protein uS9 from Thioalkalivibrio sulfidiphilus (strain HL-EbGR7).